The following is a 200-amino-acid chain: Dephospho-CoA kinase (200 aa).

In terms of domain architecture, DPCK spans 4–200; sequence VIGLTGGIAS…AILKKWNIID (197 aa). 12–17 is an ATP binding site; sequence ASGKST.

It belongs to the CoaE family.

Its subcellular location is the cytoplasm. The catalysed reaction is 3'-dephospho-CoA + ATP = ADP + CoA + H(+). It functions in the pathway cofactor biosynthesis; coenzyme A biosynthesis; CoA from (R)-pantothenate: step 5/5. In terms of biological role, catalyzes the phosphorylation of the 3'-hydroxyl group of dephosphocoenzyme A to form coenzyme A. The sequence is that of Dephospho-CoA kinase from Bacillus thuringiensis subsp. konkukian (strain 97-27).